The primary structure comprises 764 residues: Thyrotropin receptor (764 aa).

Residues 1–21 form the signal peptide; sequence MSLTPLLQLALLLALPRSLRG. Residues 22 to 413 lie on the Extracellular side of the membrane; sequence KGCPSPPCEC…EFNPCEDIMG (392 aa). A disulfide bridge connects residues Cys31 and Cys41. Residues Asn77 and Asn99 are each glycosylated (N-linked (GlcNAc...) asparagine). LRR repeat units follow at residues 125–150, 151–174, 176–199, 201–223, 225–248, and 250–271; these read LPLL…VYST, DVFF…AFQG, CNET…AFNG, KLDA…AFGG, FSGP…GLEH, and KELI…SFLH. N-linked (GlcNAc...) asparagine glycans are attached at residues Asn177 and Asn198. A glycan (N-linked (GlcNAc...) asparagine) is linked at Asn302. Sulfotyrosine is present on Tyr385. Residues 414–441 traverse the membrane as a helical segment; sequence YRFLRIVVWFVSLLALLGNVFVLVILLT. Topologically, residues 442-450 are cytoplasmic; sequence SHYKLTVPR. Residues 451 to 473 traverse the membrane as a helical segment; that stretch reads FLMCNLAFADFCMGMYLLLIASV. Residues 474 to 494 lie on the Extracellular side of the membrane; that stretch reads DLYTQSEYYNHAIDWQTGPGC. Cys494 and Cys569 are oxidised to a cystine. A helical transmembrane segment spans residues 495–517; sequence NTAGFFTVFASELSVYTLTVITL. Residues 518–537 lie on the Cytoplasmic side of the membrane; that stretch reads ERWYAITFAMRLDRKIRLRH. A helical transmembrane segment spans residues 538 to 560; sequence AYAIMAGGWVCCFLLALLPLVGI. The Extracellular portion of the chain corresponds to 561-580; that stretch reads SSYAKVSICLPMDTETPLAL. Residues 581 to 602 traverse the membrane as a helical segment; the sequence is AYIILVLLLNIVAFTIVCSCYV. The Cytoplasmic segment spans residues 603 to 625; it reads KIYITVRNPQYNPGDKDTKIAKR. A helical membrane pass occupies residues 626 to 649; that stretch reads MAVLIFTDFMCMAPISFYALSALM. Over 650–660 the chain is Extracellular; that stretch reads NKPLITVTNSK. Residues 661-682 traverse the membrane as a helical segment; sequence ILLVLFYPLNSCANPFLYAIFT. Topologically, residues 683–764 are cytoplasmic; sequence KAFQRDVFIL…ISKEYKQPVL (82 aa). The PDZ-binding motif lies at 762-764; that stretch reads PVL.

The protein belongs to the G-protein coupled receptor 1 family. FSH/LSH/TSH subfamily. As to quaternary structure, interacts with heterodimer GPHA2:GPHB5; this interaction stimulates cAMP production. Interacts (via the PDZ-binding motif) with SCRIB; regulates TSHR trafficking and function. Post-translationally, glycosylated. In terms of processing, sulfated. Sulfation on Tyr-385 plays a role in thyrotropin receptor binding and activation. Expressed in thyroide cells (at protein level).

It is found in the cell membrane. The protein localises to the basolateral cell membrane. In terms of biological role, receptor for the thyroid-stimulating hormone (TSH) or thyrotropin. Also acts as a receptor for the heterodimeric glycoprotein hormone (GPHA2:GPHB5) or thyrostimulin. The activity of this receptor is mediated by G proteins which activate adenylate cyclase. Plays a central role in controlling thyroid cell metabolism. The sequence is that of Thyrotropin receptor (TSHR) from Sus scrofa (Pig).